The chain runs to 366 residues: Chorismate synthase (366 aa).

NADP(+)-binding residues include Arg48 and Arg54. Residues 125 to 127 (RSS), 238 to 239 (NA), Gly278, 293 to 297 (KPTSS), and Arg319 each bind FMN.

The protein belongs to the chorismate synthase family. As to quaternary structure, homotetramer. FMNH2 serves as cofactor.

It catalyses the reaction 5-O-(1-carboxyvinyl)-3-phosphoshikimate = chorismate + phosphate. It functions in the pathway metabolic intermediate biosynthesis; chorismate biosynthesis; chorismate from D-erythrose 4-phosphate and phosphoenolpyruvate: step 7/7. Its function is as follows. Catalyzes the anti-1,4-elimination of the C-3 phosphate and the C-6 proR hydrogen from 5-enolpyruvylshikimate-3-phosphate (EPSP) to yield chorismate, which is the branch point compound that serves as the starting substrate for the three terminal pathways of aromatic amino acid biosynthesis. This reaction introduces a second double bond into the aromatic ring system. This chain is Chorismate synthase, found in Ralstonia pickettii (strain 12J).